A 132-amino-acid chain; its full sequence is UPF0329 protein ECU07_0050/ECU09_2020 (132 aa).

This sequence belongs to the UPF0329 family.

The sequence is that of UPF0329 protein ECU07_0050/ECU09_2020 from Encephalitozoon cuniculi (strain GB-M1) (Microsporidian parasite).